We begin with the raw amino-acid sequence, 580 residues long: D-erythrulose kinase (580 aa).

Residues 7 to 327 (DPARFTEDML…WAAPADTPAY (321 aa)) form the DhaK domain. His-217 functions as the Tele-hemiaminal-histidine intermediate in the catalytic mechanism. The tract at residues 329 to 360 (KGAAQQHVSGERRSEATARSASSGPKLAELSD) is disordered. One can recognise a DhaL domain in the interval 368 to 570 (RLVARAFDAM…LALCARTVAD (203 aa)). ATP is bound by residues 397–403 (DGDHGRG), 443–444 (TS), Gly-485, Arg-542, and 555–557 (DAG).

The catalysed reaction is D-erythrulose + ATP = D-erythrulose 4-phosphate + ADP + H(+). It functions in the pathway carbohydrate metabolism; erythritol degradation. It participates in carbohydrate metabolism; D-threitol degradation. In terms of biological role, catalyzes the phosphorylation of D-erythrulose to D-erythrulose-4P. Involved in the degradation pathways of erythritol and D-threitol, that allow M.smegmatis to grow on these compounds as the sole carbon source. The polypeptide is D-erythrulose kinase (Mycolicibacterium smegmatis (strain ATCC 700084 / mc(2)155) (Mycobacterium smegmatis)).